Here is a 1123-residue protein sequence, read N- to C-terminus: MADRGLPSEAPVVTTSPAGPPSDGPMQRLLASLAGLRQPPTPTAETANGADDPAFLATAKLRAAMAAFLLSGTAIAPADARDCWRPLLEHLCALHRAHGLPETALLAENLPGLLVHRLVVALPEAPDQAFREMEVIKDTILAVTGSDTSHALDSAGLRTAAALGPVRVRQCAVEWIDRWQTVTKSCLAMSPRTSIEALGETSLKMAPVPLGQPSANLTTPAYSLLFPAPFVQEGLRFLALVSNRVTLFSAHLQRIDDATLTPLTRALFTLALVDEYLTTPERGAVVPPPLLAQFQHTVREIDPAIMIPPLEANKMVRSREEVRVSTALSRVSPRSACAPPGTLMARVRTDVAVFDPDVPFLSSSALAVFQPAVSSLLQLGEQPSAGAQQRLLALLQQTWTLIQNTNSPSVVINTLIDAGFTPSHCTHYLSALEGFLAAGVPARTPTGHGLGEVQQLFGCIALAGSNVFGLAREYGYYANYVKTFRRVQGASEHTHGRLCEAVGLSGGVLSQTLARIMGPAVPTEHLASLRRALVGEFETAERRFSSGQPSLLRETALIWIDVYGQTHWDITPTTPATPLSALLPVGQPSHAPSVHLAAATQIRFPALEGIHPNVLADPGFVPYVLALVVGDALRATCSAAYLPRPVEFALRVLAWARDFGLGYLPTVEGHRTKLGALITLLEPAARGGLGPTMQMADNIEQLLRELYVISRGAVEQLRPLVQLQPPPPPEVGTSLLLISMYALAARGVLQDLAERADPLIRQLEDAIVLLRLHMRTLSAFFECRFESDGRRLYAVVGDTPDRLGPWPPEAMGDAVSQYCSMYHDAKRALVASLASLRSVITETTAHLGVCDELAAQVSHEDNVLAVVRREIHGFLSVVSGIHARASKLLSGDQVPGFCFMGQFLARWRRLSACYQAARAAAGPEPVAEFVQELHDTWKGLQTERAVVVAPLVSSADQRAAAIREVMAHAPEDAPPQSPAADRVVLTSRRDLGAWGDYSLGPLGQTTAVPDSVDLSRQGLAVTLSMDWLLMNELLRVTDGVFRASAFRPLAGPESPRDLEVRDAGNSLPAPMPMDAQKPEAYGHGPRQADREGAPHSNTPVEDDEMIPEDTVAPPTDLPLTSYQ.

Disordered stretches follow at residues 1-27 and 1047-1123; these read MADR…GPMQ and RPLA…TSYQ. The tract at residues 568-1123 is interaction with large tegument protein; that stretch reads WDITPTTPAT…PTDLPLTSYQ (556 aa).

The protein belongs to the herpesviridae inner tegument protein family. In terms of assembly, interacts (via C-terminus) with the large tegument protein/LTP (via N-terminus). Interacts with host DST. Interacts with host RIGI; this interaction inhibits RIGI activation. Interacts with host CGAS; this interaction inhibits host CGAS activation. Interacts with host TAOK3.

The protein resides in the virion tegument. The protein localises to the host cytoplasm. It localises to the host nucleus. It is found in the host Golgi apparatus. Its subcellular location is the host trans-Golgi network. The enzyme catalyses L-asparaginyl-[protein] + H2O = L-aspartyl-[protein] + NH4(+). It carries out the reaction L-glutaminyl-[protein] + H2O = L-glutamyl-[protein] + NH4(+). Functionally, plays an essential role in cytoplasmic secondary envelopment during viral egress. Interacts with the capsid via the large tegument protein/LTP and participates in its transport to the host trans-Golgi network (TGN) where secondary envelopment occurs. Modulates tegumentation and capsid accumulation at the viral assembly complex. Plays a role in microtubule-based retrograde axonal transport to promote neuroinvasion. Also plays a role in the inhibition of host immune response by acting as a viral deamidase. Deamidates host RIGI on two asparagines which becomes unable to sense viral dsRNA. In turn, its ability to trigger antiviral immune response and restrict viral replication is inhibited. Also deamidates a critical asparagine on host CGAS which abolishes cGAMP synthesis and downstream innate immune activation. This is Inner tegument protein (UL37) from Homo sapiens (Human).